We begin with the raw amino-acid sequence, 117 residues long: NADH-ubiquinone oxidoreductase chain 3 (117 aa).

The next 3 membrane-spanning stretches (helical) occupy residues 1–21 (MLML…VMML), 58–78 (FLIA…LPMI), and 86–106 (LMNW…GLYH).

This sequence belongs to the complex I subunit 3 family.

It localises to the mitochondrion membrane. It catalyses the reaction a ubiquinone + NADH + 5 H(+)(in) = a ubiquinol + NAD(+) + 4 H(+)(out). Core subunit of the mitochondrial membrane respiratory chain NADH dehydrogenase (Complex I) that is believed to belong to the minimal assembly required for catalysis. Complex I functions in the transfer of electrons from NADH to the respiratory chain. The immediate electron acceptor for the enzyme is believed to be ubiquinone. In Anopheles gambiae (African malaria mosquito), this protein is NADH-ubiquinone oxidoreductase chain 3 (mt:ND3).